A 220-amino-acid polypeptide reads, in one-letter code: Protein-methionine-sulfoxide reductase heme-binding subunit MsrQ (220 aa).

6 consecutive transmembrane segments (helical) span residues 20–40, 52–72, 86–106, 122–142, 153–173, and 175–195; these read LWLLYTAGFVPAVWTFYLGAT, EHLLGLWALRFLILTLLVTPI, ALGLLAFYYALMHFTTYMVLD, PFITIGMISLALLVPLALTSN, WSSLHKLVYIAIAGSAVHFLM, and VKSWPAEPVIYAAIVAALLLW.

The protein belongs to the MsrQ family. In terms of assembly, heterodimer of a catalytic subunit (MsrP) and a heme-binding subunit (MsrQ). It depends on FMN as a cofactor. Heme b serves as cofactor.

The protein resides in the cell inner membrane. Part of the MsrPQ system that repairs oxidized periplasmic proteins containing methionine sulfoxide residues (Met-O), using respiratory chain electrons. Thus protects these proteins from oxidative-stress damage caused by reactive species of oxygen and chlorine generated by the host defense mechanisms. MsrPQ is essential for the maintenance of envelope integrity under bleach stress, rescuing a wide series of structurally unrelated periplasmic proteins from methionine oxidation. MsrQ provides electrons for reduction to the reductase catalytic subunit MsrP, using the quinone pool of the respiratory chain. This Brucella abortus (strain S19) protein is Protein-methionine-sulfoxide reductase heme-binding subunit MsrQ.